The following is a 471-amino-acid chain: MPN domain-containing protein (471 aa).

Residues 1–10 are compositionally biased toward low complexity; that stretch reads MAAPEPLSPA. Residues 1–63 are disordered; it reads MAAPEPLSPA…GGGGAGAGGC (63 aa). N-acetylalanine is present on alanine 2. Serine 8 carries the phosphoserine modification. Positions 16–29 are enriched in acidic residues; it reads EAPEEDEDEAEAED. Residues 36–63 show a composition bias toward gly residues; the sequence is GAGGGRSGGGGSSVSGGGGGGGAGAGGC. Residues 71-166 enclose the RAMA domain; it reads TRRAVTLRVL…KYKATWLRLH (96 aa). The DNA site is built by serine 123, serine 125, and tryptophan 145. The disordered stretch occupies residues 170 to 229; that stretch reads TPATAADESPASEGEEEELLMEEEEEDVLAGVSAEDKSRRPLGKSPSEPAHPEATTPGKR. A phosphoserine mark is found at serine 178 and serine 181. Residues 182–197 are compositionally biased toward acidic residues; it reads EGEEEELLMEEEEEDV. The MPN domain occupies 272–407; sequence VAVSSNVLFL…PESKISPFWV (136 aa). 3 residues coordinate Zn(2+): histidine 349, histidine 351, and aspartate 362. The short motif at 349-362 is the JAMM motif element; the sequence is HSHPHSPALPSLQD.

The protein belongs to the peptidase M67 family. In terms of assembly, monomer. Mainly monomoric, but when binds to dsDNA, forms homotetramer assembled into two homodimers. May interact with histones; this interaction is facilitated by dsDNA binding. In terms of processing, degraded following binding to N(6)-methyladenosine methylated DNA (m6A).

Probable protease. Acts as a sensor of N(6)-methyladenosine methylation on DNA (m6A): recognizes and binds m6A DNA, leading to its degradation. Binds only double strand DNA (dsDNA) in a sequence-independent manner. This chain is MPN domain-containing protein, found in Homo sapiens (Human).